The sequence spans 302 residues: Tyrosine recombinase XerC (302 aa).

A Core-binding (CB) domain is found at 2 to 89 (QPLMEQIRAF…AIRSFYRHLL (88 aa)). A Tyr recombinase domain is found at 110 to 289 (RLPFHLDIDQ…SLDRLMEVYD (180 aa)). Active-site residues include Arg150, Lys174, His241, Arg244, and His267. Tyr276 (O-(3'-phospho-DNA)-tyrosine intermediate) is an active-site residue.

Belongs to the 'phage' integrase family. XerC subfamily. In terms of assembly, forms a cyclic heterotetrameric complex composed of two molecules of XerC and two molecules of XerD.

Its subcellular location is the cytoplasm. Its function is as follows. Site-specific tyrosine recombinase, which acts by catalyzing the cutting and rejoining of the recombining DNA molecules. The XerC-XerD complex is essential to convert dimers of the bacterial chromosome into monomers to permit their segregation at cell division. It also contributes to the segregational stability of plasmids. The chain is Tyrosine recombinase XerC from Pelobacter propionicus (strain DSM 2379 / NBRC 103807 / OttBd1).